Reading from the N-terminus, the 190-residue chain is ATP synthase subunit delta (190 aa).

It belongs to the ATPase delta chain family. F-type ATPases have 2 components, F(1) - the catalytic core - and F(0) - the membrane proton channel. F(1) has five subunits: alpha(3), beta(3), gamma(1), delta(1), epsilon(1). F(0) has three main subunits: a(1), b(2) and c(10-14). The alpha and beta chains form an alternating ring which encloses part of the gamma chain. F(1) is attached to F(0) by a central stalk formed by the gamma and epsilon chains, while a peripheral stalk is formed by the delta and b chains.

It is found in the cell inner membrane. In terms of biological role, f(1)F(0) ATP synthase produces ATP from ADP in the presence of a proton or sodium gradient. F-type ATPases consist of two structural domains, F(1) containing the extramembraneous catalytic core and F(0) containing the membrane proton channel, linked together by a central stalk and a peripheral stalk. During catalysis, ATP synthesis in the catalytic domain of F(1) is coupled via a rotary mechanism of the central stalk subunits to proton translocation. Functionally, this protein is part of the stalk that links CF(0) to CF(1). It either transmits conformational changes from CF(0) to CF(1) or is implicated in proton conduction. The sequence is that of ATP synthase subunit delta from Methylobacterium nodulans (strain LMG 21967 / CNCM I-2342 / ORS 2060).